Consider the following 757-residue polypeptide: Polyribonucleotide nucleotidyltransferase (757 aa).

Asp-525 and Asp-531 together coordinate Mg(2+). The KH domain occupies 591–650; it reads PRVISVNIPVDKIGELIGPKGKTINAIQDETGADISIEEDGAVYIGAVDGPSAEAARAQV. Positions 662–734 constitute an S1 motif domain; it reads GESFLGTVVK…DRGKLSLAPV (73 aa). The tract at residues 736 to 757 is disordered; it reads EEAADQEGSAAASDGPEAPAEG.

This sequence belongs to the polyribonucleotide nucleotidyltransferase family. It depends on Mg(2+) as a cofactor.

Its subcellular location is the cytoplasm. It catalyses the reaction RNA(n+1) + phosphate = RNA(n) + a ribonucleoside 5'-diphosphate. Involved in mRNA degradation. Catalyzes the phosphorolysis of single-stranded polyribonucleotides processively in the 3'- to 5'-direction. The sequence is that of Polyribonucleotide nucleotidyltransferase from Clavibacter sepedonicus (Clavibacter michiganensis subsp. sepedonicus).